The primary structure comprises 389 residues: MLLWLAQYFQDELGPLRVFNFITFRAVFATLTALVIGLVTGPAVIRMLTRLKVGQAVRTDGPQTHLIKSGTPTMGGVLILVSIGISTLLWTDLSNRFIWVVLIVTLGFGAVGWVDDYRKVVYKDPKGMASREKYMWQSIIGLFAAIYLAFSVSAPSNSQFLDLFIAWVQSGFSMDLPPKADLIVPFFKTISYPLGVWGFIALTYFVIVGTSNAVNLTDGLDGLAIMPTVMVGTALGLFAYLTGSANYSKYLFIPHIPGAGELIIFCGAMAGAGLAFLWFNAHPAQVFMGDVGALALGGALGTIAVIVRQEVVLFIMGGIFVVETLSVMLQVAYFKYTKMRTGIGKRILLMAPLHHHFEQKGWKETQVVVRFWIITMMLVLFGLSTLKLR.

The next 10 membrane-spanning stretches (helical) occupy residues 21-41, 70-90, 97-117, 134-154, 189-209, 222-242, 259-279, 286-306, 311-331, and 366-386; these read FITF…LVTG, GTPT…TLLW, FIWV…VDDY, YMWQ…SVSA, TISY…VIVG, GLAI…AYLT, AGEL…FLWF, VFMG…IAVI, VVLF…MLQV, and QVVV…LSTL.

This sequence belongs to the glycosyltransferase 4 family. MraY subfamily. The cofactor is Mg(2+).

It is found in the cell inner membrane. The catalysed reaction is UDP-N-acetyl-alpha-D-muramoyl-L-alanyl-gamma-D-glutamyl-meso-2,6-diaminopimeloyl-D-alanyl-D-alanine + di-trans,octa-cis-undecaprenyl phosphate = di-trans,octa-cis-undecaprenyl diphospho-N-acetyl-alpha-D-muramoyl-L-alanyl-D-glutamyl-meso-2,6-diaminopimeloyl-D-alanyl-D-alanine + UMP. It participates in cell wall biogenesis; peptidoglycan biosynthesis. Functionally, catalyzes the initial step of the lipid cycle reactions in the biosynthesis of the cell wall peptidoglycan: transfers peptidoglycan precursor phospho-MurNAc-pentapeptide from UDP-MurNAc-pentapeptide onto the lipid carrier undecaprenyl phosphate, yielding undecaprenyl-pyrophosphoryl-MurNAc-pentapeptide, known as lipid I. This Janthinobacterium sp. (strain Marseille) (Minibacterium massiliensis) protein is Phospho-N-acetylmuramoyl-pentapeptide-transferase.